The following is a 292-amino-acid chain: Putative ribonuclease 3 (292 aa).

The region spanning L32–D158 is the RNase III domain. One can recognise a DRBM domain in the interval D204–L276.

This sequence belongs to the IIV-6 142R family.

It catalyses the reaction Endonucleolytic cleavage to 5'-phosphomonoester.. In terms of biological role, digests double-stranded RNA. This is Putative ribonuclease 3 from Acheta domesticus (House cricket).